Here is a 241-residue protein sequence, read N- to C-terminus: MRHSVKTVVVVSSLLLGTALAGGAGAQSAGNGVPSTNVNTPAPNTGQSTAQNTNTASPLPYNRATTLPAAGTEDLKKSVQALQNTLTELQALQLQTKQAHWNVSGTLWYTLHELLQDHYEGISKFADDVAERQLSVGASSDGRAITIVAASRLPEIPGGFLDDAQVIQFFTYQYETVGQRIHQRVGDVEKVDPTTANLLQEVEHIIEKYQWQMRAFLQNTPTDPNTGFDINNGKPVPLRGR.

The interval 25 to 65 is disordered; the sequence is GAQSAGNGVPSTNVNTPAPNTGQSTAQNTNTASPLPYNRAT. The span at 33–57 shows a compositional bias: polar residues; it reads VPSTNVNTPAPNTGQSTAQNTNTAS. Positions 100, 127, and 131 each coordinate Fe cation. The span at 220 to 229 shows a compositional bias: polar residues; the sequence is TPTDPNTGFD. The tract at residues 220-241 is disordered; sequence TPTDPNTGFDINNGKPVPLRGR.

This sequence belongs to the Dps family. In terms of assembly, homododecamer. The 12 subunits form a hollow sphere into which the mineral iron core of up to 500 Fe(3+) can be deposited.

It localises to the cytoplasm. It carries out the reaction 2 Fe(2+) + H2O2 + 2 H(+) = 2 Fe(3+) + 2 H2O. In terms of biological role, protects DNA from oxidative damage by sequestering intracellular Fe(2+) ion and storing it in the form of Fe(3+) oxyhydroxide mineral. One hydrogen peroxide oxidizes two Fe(2+) ions, which prevents hydroxyl radical production by the Fenton reaction. This chain is DNA protection during starvation protein 2 (dps2), found in Deinococcus radiodurans (strain ATCC 13939 / DSM 20539 / JCM 16871 / CCUG 27074 / LMG 4051 / NBRC 15346 / NCIMB 9279 / VKM B-1422 / R1).